The sequence spans 374 residues: Queuine tRNA-ribosyltransferase (374 aa).

Asp89 acts as the Proton acceptor in catalysis. Residues 89 to 93, Asp143, Gln187, and Gly214 each bind substrate; that span reads DSGGF. The tract at residues 245-251 is RNA binding; it reads GVGKPED. Asp264 acts as the Nucleophile in catalysis. The RNA binding; important for wobble base 34 recognition stretch occupies residues 269–273; sequence TRNAR. Zn(2+) is bound by residues Cys302, Cys304, Cys307, and His333.

Belongs to the queuine tRNA-ribosyltransferase family. In terms of assembly, homodimer. Within each dimer, one monomer is responsible for RNA recognition and catalysis, while the other monomer binds to the replacement base PreQ1. Zn(2+) is required as a cofactor.

The enzyme catalyses 7-aminomethyl-7-carbaguanine + guanosine(34) in tRNA = 7-aminomethyl-7-carbaguanosine(34) in tRNA + guanine. It participates in tRNA modification; tRNA-queuosine biosynthesis. Its function is as follows. Catalyzes the base-exchange of a guanine (G) residue with the queuine precursor 7-aminomethyl-7-deazaguanine (PreQ1) at position 34 (anticodon wobble position) in tRNAs with GU(N) anticodons (tRNA-Asp, -Asn, -His and -Tyr). Catalysis occurs through a double-displacement mechanism. The nucleophile active site attacks the C1' of nucleotide 34 to detach the guanine base from the RNA, forming a covalent enzyme-RNA intermediate. The proton acceptor active site deprotonates the incoming PreQ1, allowing a nucleophilic attack on the C1' of the ribose to form the product. After dissociation, two additional enzymatic reactions on the tRNA convert PreQ1 to queuine (Q), resulting in the hypermodified nucleoside queuosine (7-(((4,5-cis-dihydroxy-2-cyclopenten-1-yl)amino)methyl)-7-deazaguanosine). The protein is Queuine tRNA-ribosyltransferase of Shewanella baltica (strain OS223).